We begin with the raw amino-acid sequence, 260 residues long: Zinc import ATP-binding protein ZnuC (260 aa).

Residues 18–234 form the ABC transporter domain; that stretch reads IRLQEVAVTF…PEYQKLFGSH (217 aa). Residue 50-57 participates in ATP binding; the sequence is GNNGAGKT. The disordered stretch occupies residues 241–260; that stretch reads VFPHDHHDHSGPALAGGGRG.

It belongs to the ABC transporter superfamily. Zinc importer (TC 3.A.1.15.5) family. In terms of assembly, the complex is composed of two ATP-binding proteins (ZnuC), two transmembrane proteins (ZnuB) and a solute-binding protein (ZnuA).

The protein resides in the cell inner membrane. The enzyme catalyses Zn(2+)(out) + ATP(in) + H2O(in) = Zn(2+)(in) + ADP(in) + phosphate(in) + H(+)(in). Its function is as follows. Part of the ABC transporter complex ZnuABC involved in zinc import. Responsible for energy coupling to the transport system. The protein is Zinc import ATP-binding protein ZnuC of Halorhodospira halophila (strain DSM 244 / SL1) (Ectothiorhodospira halophila (strain DSM 244 / SL1)).